The primary structure comprises 272 residues: Auxin-responsive protein IAA5 (272 aa).

The tract at residues 1–92 is disordered; that stretch reads MSPPLEPHDY…DSSPRHGASS (92 aa). 2 stretches are compositionally biased toward low complexity: residues 14-33 and 40-50; these read SAAA…SPNP and PRLTLRLGLPG. An EAR-like (transcriptional repression) motif is present at residues 44-48; sequence LRLGL. Residues 152–256 enclose the PB1 domain; sequence PLYVKVSMDG…RKLKIMRGSD (105 aa).

The protein belongs to the Aux/IAA family. In terms of assembly, homodimers and heterodimers. In terms of tissue distribution, highly expressed in roots and flowers. Expressed in shoots.

It is found in the nucleus. In terms of biological role, aux/IAA proteins are short-lived transcriptional factors that function as repressors of early auxin response genes at low auxin concentrations. This Oryza sativa subsp. indica (Rice) protein is Auxin-responsive protein IAA5 (IAA5).